The following is a 238-amino-acid chain: Fatty acid metabolism regulator protein (238 aa).

The HTH gntR-type domain occupies 6–74; sequence KGPASFAEKY…HGKPTRVNNF (69 aa). Positions 34 to 53 form a DNA-binding region, H-T-H motif; that stretch reads ERELSELIGVTRTTLREVLQ.

In terms of assembly, homodimer.

It is found in the cytoplasm. Its function is as follows. Multifunctional regulator of fatty acid metabolism. The sequence is that of Fatty acid metabolism regulator protein from Shewanella putrefaciens (strain CN-32 / ATCC BAA-453).